Consider the following 246-residue polypeptide: Bis(5'-nucleosyl)-tetraphosphatase PrpE [asymmetrical] (246 aa).

The protein belongs to the PrpE family. Requires Ni(2+) as cofactor.

The catalysed reaction is P(1),P(4)-bis(5'-guanosyl) tetraphosphate + H2O = GMP + GTP + 2 H(+). Its function is as follows. Asymmetrically hydrolyzes Ap4p to yield AMP and ATP. The polypeptide is Bis(5'-nucleosyl)-tetraphosphatase PrpE [asymmetrical] (Bacillus cereus (strain AH820)).